We begin with the raw amino-acid sequence, 459 residues long: Bifunctional protein GlmU (459 aa).

A pyrophosphorylase region spans residues 1 to 229 (MSNFAIILAA…FDESLGVNDR (229 aa)). Residues 8 to 11 (LAAG), K22, Q72, 77 to 78 (GT), 101 to 102 (GD), G139, E154, N169, and N227 each bind UDP-N-acetyl-alpha-D-glucosamine. Residue D102 coordinates Ca(2+). D102 serves as a coordination point for Mg(2+). N227 serves as a coordination point for Ca(2+). N227 contacts Mg(2+). Residues 230 to 250 (VALATAESVMRRRINHKHMVN) form a linker region. The tract at residues 251-459 (GVSFVNPEAT…TRLPHHPKNQ (209 aa)) is N-acetyltransferase. Positions 332 and 350 each coordinate UDP-N-acetyl-alpha-D-glucosamine. Residue H362 is the Proton acceptor of the active site. UDP-N-acetyl-alpha-D-glucosamine is bound by residues Y365 and N376. Residues A379, 385–386 (NY), S404, A422, and R439 contribute to the acetyl-CoA site.

It in the N-terminal section; belongs to the N-acetylglucosamine-1-phosphate uridyltransferase family. The protein in the C-terminal section; belongs to the transferase hexapeptide repeat family. In terms of assembly, homotrimer. Mg(2+) is required as a cofactor. Requires Ca(2+) as cofactor.

It is found in the cytoplasm. The enzyme catalyses alpha-D-glucosamine 1-phosphate + acetyl-CoA = N-acetyl-alpha-D-glucosamine 1-phosphate + CoA + H(+). It catalyses the reaction N-acetyl-alpha-D-glucosamine 1-phosphate + UTP + H(+) = UDP-N-acetyl-alpha-D-glucosamine + diphosphate. Its pathway is nucleotide-sugar biosynthesis; UDP-N-acetyl-alpha-D-glucosamine biosynthesis; N-acetyl-alpha-D-glucosamine 1-phosphate from alpha-D-glucosamine 6-phosphate (route II): step 2/2. The protein operates within nucleotide-sugar biosynthesis; UDP-N-acetyl-alpha-D-glucosamine biosynthesis; UDP-N-acetyl-alpha-D-glucosamine from N-acetyl-alpha-D-glucosamine 1-phosphate: step 1/1. It participates in bacterial outer membrane biogenesis; LPS lipid A biosynthesis. In terms of biological role, catalyzes the last two sequential reactions in the de novo biosynthetic pathway for UDP-N-acetylglucosamine (UDP-GlcNAc). The C-terminal domain catalyzes the transfer of acetyl group from acetyl coenzyme A to glucosamine-1-phosphate (GlcN-1-P) to produce N-acetylglucosamine-1-phosphate (GlcNAc-1-P), which is converted into UDP-GlcNAc by the transfer of uridine 5-monophosphate (from uridine 5-triphosphate), a reaction catalyzed by the N-terminal domain. The sequence is that of Bifunctional protein GlmU from Streptococcus pneumoniae serotype 4 (strain ATCC BAA-334 / TIGR4).